Consider the following 122-residue polypeptide: Large ribosomal subunit protein uL14 (122 aa).

The protein belongs to the universal ribosomal protein uL14 family. Part of the 50S ribosomal subunit. Forms a cluster with proteins L3 and L19. In the 70S ribosome, L14 and L19 interact and together make contacts with the 16S rRNA in bridges B5 and B8.

Functionally, binds to 23S rRNA. Forms part of two intersubunit bridges in the 70S ribosome. The polypeptide is Large ribosomal subunit protein uL14 (Psychromonas ingrahamii (strain DSM 17664 / CCUG 51855 / 37)).